The following is a 209-amino-acid chain: uncharacterized protein (209 aa).

Residues 39 to 75 (VSFENFMERYDTMEKNIQDLQNKYEEMANNLVAVMAD) adopt a coiled-coil conformation. A disordered region spans residues 103–131 (TMKDATSLPPPNPNNEQSVFTNGSPTSGK). Residues 116–129 (NNEQSVFTNGSPTS) are compositionally biased toward polar residues.

Belongs to the asfivirus K205R family.

It is found in the host cytoplasm. In terms of biological role, induces host endoplasmic reticulum stress and consequently activates autophagy and NF-kappa-B signaling pathway. In turn, may induce autophagy-mediated STING1 degradation and innate immune evasion. This is an uncharacterized protein from Ornithodoros (relapsing fever ticks).